The chain runs to 466 residues: MVDGGGGASDLLVIFGITGDLARKMTFRALYRLERHQLLDCPILGVASDDMSVGQLVKWARESIGRTEKIDDAVFDRLAGRLSYLHGDVTDSQLYDSLAELIGSACRPLYYLEMPPALFAPIVENLANVRLLERARVAVEKPFGHDLASALELNARLRAVLGEDQILRVDHFLGKQPVVELEYLRFANQALAELWDRNSISEIHITMAEDFGVEDRGKFYDAVGALRDVVQNHLLQVLALVTMEPPVGSSADDLNDKKAEVFRAMAPLDPDRCVRGQYLGYTEVAGVASDSATETYVALRTEIDNWRWAGVPIFVRSGKELPAKVTEVRLFLRRVPALAFLPNRRPAEPNQIVLRIDPDPGMRLQISAHTDDSWRDIHLDSSFAVDLGEPIRPYERLLYAGLVGDHQLFAREDSIEQTWRIVQPLLDNPGEIHRYDRGSWGPEAAQSLLRGHRGWQSPWLPRGTDA.

Residues Ser48, 88-89, and Lys141 each bind NADP(+); that span reads DV. Residues His171, Lys175, Glu209, and Asp228 each contribute to the substrate site. The active-site Proton acceptor is the His233. The substrate site is built by Lys319 and Lys324.

This sequence belongs to the glucose-6-phosphate dehydrogenase family.

The enzyme catalyses D-glucose 6-phosphate + NADP(+) = 6-phospho-D-glucono-1,5-lactone + NADPH + H(+). It functions in the pathway carbohydrate degradation; pentose phosphate pathway; D-ribulose 5-phosphate from D-glucose 6-phosphate (oxidative stage): step 1/3. Its function is as follows. Catalyzes the oxidation of glucose 6-phosphate to 6-phosphogluconolactone. The polypeptide is Glucose-6-phosphate 1-dehydrogenase 1 (Mycobacterium tuberculosis (strain CDC 1551 / Oshkosh)).